The primary structure comprises 1474 residues: Adhesion G protein-coupled receptor L1 (1474 aa).

Positions 1 to 24 (MARLAAVLWNLCVTAVLVTSATQG) are cleaved as a signal peptide. The Extracellular segment spans residues 25-858 (LSRAGLPFGL…EIYQGRINEL (834 aa)). An SUEL-type lectin domain is found at 40-129 (ACEGYPIELR…KYLEVQYDCV (90 aa)). Disulfide bonds link Cys-41-Cys-71, Cys-50-Cys-128, Cys-83-Cys-115, Cys-96-Cys-102, and Cys-140-Cys-322. Glu-42 is a binding site for alpha-L-rhamnose. N-linked (GlcNAc...) asparagine glycosylation is present at Asn-98. 117–120 (GTYK) is an alpha-L-rhamnose binding site. An Olfactomedin-like domain is found at 139 to 398 (VCPGTLQKVL…VVRYSLEFGP (260 aa)). Residues 400–434 (DPSAGPATSPPLSTTTTARPTPLTSTASPAATTPL) are disordered. Positions 405-434 (PATSPPLSTTTTARPTPLTSTASPAATTPL) are enriched in low complexity. 2 cysteine pairs are disulfide-bonded: Cys-480–Cys-515 and Cys-503–Cys-532. Residues Asn-531, Asn-640, Asn-742, Asn-801, Asn-806, and Asn-827 are each glycosylated (N-linked (GlcNAc...) asparagine). In terms of domain architecture, GAIN-B spans 669–851 (PARFLAAKEN…AVLMAHREIY (183 aa)). 2 disulfides stabilise this stretch: Cys-802–Cys-833 and Cys-821–Cys-835. The tract at residues 802–851 (CSFWNYSERSMLGYWSTQGCRLVESNKTHTTCACSHLTNFAVLMAHREIY) is GPS. Residues 859–879 (LLSVITWVGIVISLVCLAICI) traverse the membrane as a helical segment. The Cytoplasmic segment spans residues 880–893 (STFCFLRGLQTDRN). Residues 894–914 (TIHKNLCINLFLAELLFLVGI) traverse the membrane as a helical segment. The Extracellular portion of the chain corresponds to 915–920 (DKTQYE). Residues 921-941 (IACPIFAGLLHYFFLAAFSWL) traverse the membrane as a helical segment. The Cytoplasmic segment spans residues 942–964 (CLEGVHLYLLLVEVFESEYSRTK). A helical transmembrane segment spans residues 965–985 (YYYLGGYCFPALVVGIAAAID). Residues 986–1002 (YRSYGTEKACWLRVDNY) are Extracellular-facing. The chain crosses the membrane as a helical span at residues 1003–1023 (FIWSFIGPVSFVIVVNLVFLM). Over 1024–1050 (VTLHKMIRSSSVLKPDSSRLDNIKSWA) the chain is Cytoplasmic. The helical transmembrane segment at 1051–1071 (LGAIALLFLLGLTWAFGLLFI) threads the bilayer. The Extracellular portion of the chain corresponds to 1072 to 1075 (NKES). Residues 1076 to 1096 (VVMAYLFTTFNAFQGVFIFVF) traverse the membrane as a helical segment. The Cytoplasmic segment spans residues 1097–1474 (HCALQKKVHK…DGQMQLVTSL (378 aa)). Position 1194 is an omega-N-methylarginine (Arg-1194). Ser-1220 is modified (phosphoserine). Disordered regions lie at residues 1248 to 1273 (FNNS…RGRN), 1294 to 1328 (RGSS…PGGA), 1360 to 1429 (ESES…SRPP), and 1451 to 1474 (YLAA…VTSL). Composition is skewed to pro residues over residues 1302–1314 (GPPP…PPVP) and 1408–1420 (ALPP…PGPP). Position 1473 is a phosphoserine (Ser-1473).

This sequence belongs to the G-protein coupled receptor 2 family. Adhesion G-protein coupled receptor (ADGR) subfamily. In terms of assembly, forms a heterodimer, consisting of a large extracellular region (p120) non-covalently linked to a seven-transmembrane moiety (p85). Interacts with syntaxin and with proteins of the SHANK family via the PDZ domain. Interacts (via extracellular domain) with FLRT1, FLRT2 and FLRT3 (via extracellular domain). Autoproteolytically cleaved into 2 subunits, an extracellular subunit and a seven-transmembrane subunit. This proteolytic processing takes place early in the biosynthetic pathway, either in the endoplasmic reticulum or in the early compartment of the Golgi apparatus.

Its subcellular location is the cell membrane. It is found in the cell projection. The protein resides in the axon. The protein localises to the growth cone. It localises to the synapse. Its subcellular location is the presynaptic cell membrane. It is found in the synaptosome. In terms of biological role, calcium-independent receptor of high affinity for alpha-latrotoxin, an excitatory neurotoxin present in black widow spider venom which triggers massive exocytosis from neurons and neuroendocrine cells. Receptor for TENM2 that mediates heterophilic synaptic cell-cell contact and postsynaptic specialization. Receptor probably implicated in the regulation of exocytosis. This chain is Adhesion G protein-coupled receptor L1, found in Homo sapiens (Human).